Here is a 452-residue protein sequence, read N- to C-terminus: Friend leukemia integration 1 transcription factor (452 aa).

Ser39 is modified (phosphoserine). The PNT domain occupies 112–198 (PPPPNMTTNE…SHLTYLRESS (87 aa)). Residues 202–214 (YNTTSHTDPSSRL) show a composition bias toward polar residues. The disordered stretch occupies residues 202 to 272 (YNTTSHTDPS…YQILGPTSSR (71 aa)). Basic and acidic residues predominate over residues 215–226 (NVKEDPSYDSVR). The span at 248 to 257 (QTMSKNTEQR) shows a compositional bias: polar residues. The ETS DNA-binding region spans 281–361 (IQLWQFLLEL…HGKRYAYKFD (81 aa)).

This sequence belongs to the ETS family. As to quaternary structure, can form homodimers or heterodimers with ETV6/TEL1.

Its subcellular location is the nucleus. Sequence-specific transcriptional activator. Recognizes the DNA sequence 5'-C[CA]GGAAGT-3'. The sequence is that of Friend leukemia integration 1 transcription factor (FLI1) from Bos taurus (Bovine).